The following is a 563-amino-acid chain: Arginine--tRNA ligase (563 aa).

Residues 121-131 (PNIAKPFSIGH) carry the 'HIGH' region motif.

The protein belongs to the class-I aminoacyl-tRNA synthetase family. As to quaternary structure, monomer.

Its subcellular location is the cytoplasm. It catalyses the reaction tRNA(Arg) + L-arginine + ATP = L-arginyl-tRNA(Arg) + AMP + diphosphate. In Streptococcus pyogenes serotype M6 (strain ATCC BAA-946 / MGAS10394), this protein is Arginine--tRNA ligase.